A 164-amino-acid chain; its full sequence is Crossover junction endodeoxyribonuclease RuvC (164 aa).

Active-site residues include Asp7, Glu67, and Asp139. Residues Asp7, Glu67, and Asp139 each contribute to the Mg(2+) site.

It belongs to the RuvC family. As to quaternary structure, homodimer which binds Holliday junction (HJ) DNA. The HJ becomes 2-fold symmetrical on binding to RuvC with unstacked arms; it has a different conformation from HJ DNA in complex with RuvA. In the full resolvosome a probable DNA-RuvA(4)-RuvB(12)-RuvC(2) complex forms which resolves the HJ. The cofactor is Mg(2+).

Its subcellular location is the cytoplasm. The catalysed reaction is Endonucleolytic cleavage at a junction such as a reciprocal single-stranded crossover between two homologous DNA duplexes (Holliday junction).. Its function is as follows. The RuvA-RuvB-RuvC complex processes Holliday junction (HJ) DNA during genetic recombination and DNA repair. Endonuclease that resolves HJ intermediates. Cleaves cruciform DNA by making single-stranded nicks across the HJ at symmetrical positions within the homologous arms, yielding a 5'-phosphate and a 3'-hydroxyl group; requires a central core of homology in the junction. The consensus cleavage sequence is 5'-(A/T)TT(C/G)-3'. Cleavage occurs on the 3'-side of the TT dinucleotide at the point of strand exchange. HJ branch migration catalyzed by RuvA-RuvB allows RuvC to scan DNA until it finds its consensus sequence, where it cleaves and resolves the cruciform DNA. This Citrifermentans bemidjiense (strain ATCC BAA-1014 / DSM 16622 / JCM 12645 / Bem) (Geobacter bemidjiensis) protein is Crossover junction endodeoxyribonuclease RuvC.